The sequence spans 509 residues: MDIRAAEISAILKEQIKNFGQEAEVTEVGQVLAVGDGIARVYGLDNVQAGEMVEFESGVRGMALNLEQDNVGVVIFGSDREIKEGQTVKRTGSIVDVPVGKGLLGRVVDGLGNPIDGKGPIQSTERRRVDVKAPGIIPRKSVHEPMSTGLKAIDALIPVGRGQRELIIGDRQTGKTAIALDTILNQKSAHAGADENAKLYCVYVAIGQKRSTVAQFVKVLEDQGALEYSIVIAATASDAAPMQFIAPFAGCAMGEYFRDNGMHAVIVYDDLSKQAVAYRQMSLLLRRPPGREAYPGDVFYLHSRLLERAAKMGDAAGNGSLTALPVIETQANDVSAYIPTNVISITDGQIFLETDLFYQGVRPAVNVGLSVSRVGSSAQTKAMKKVAGKIKGELAQYREMAAFAQFGSDLDVSTQRLLNRGARLTELLKQPQFSPLKMEEQVAVIYAGVNGYLDKLPVGKVRAFEEQLLGTLRSKHQDWLNAVRDSKDLSDANANTLKGVVEATAKSFA.

Gly169–Thr176 serves as a coordination point for ATP.

The protein belongs to the ATPase alpha/beta chains family. In terms of assembly, F-type ATPases have 2 components, CF(1) - the catalytic core - and CF(0) - the membrane proton channel. CF(1) has five subunits: alpha(3), beta(3), gamma(1), delta(1), epsilon(1). CF(0) has three main subunits: a(1), b(2) and c(9-12). The alpha and beta chains form an alternating ring which encloses part of the gamma chain. CF(1) is attached to CF(0) by a central stalk formed by the gamma and epsilon chains, while a peripheral stalk is formed by the delta and b chains.

It localises to the cell inner membrane. The enzyme catalyses ATP + H2O + 4 H(+)(in) = ADP + phosphate + 5 H(+)(out). Its function is as follows. Produces ATP from ADP in the presence of a proton gradient across the membrane. The alpha chain is a regulatory subunit. In Methylorubrum extorquens (strain CM4 / NCIMB 13688) (Methylobacterium extorquens), this protein is ATP synthase subunit alpha.